Reading from the N-terminus, the 499-residue chain is Centrosomal protein of 57 kDa (499 aa).

Over residues 1 to 16 (MAAASVSAASDSQFSS) the composition is skewed to low complexity. Positions 1–41 (MAAASVSAASDSQFSSVLAEPSRSNGNMVHHSSSPYVLYPP) are disordered. Residues 22–35 (SRSNGNMVHHSSSP) show a composition bias toward polar residues. Serine 53 carries the post-translational modification Phosphoserine. The tract at residues 58–239 (TFAYPESNSR…RAAELQSGIE (182 aa)) is centrosome localization domain (CLD). The stretch at 63-242 (ESNSRAIFSA…ELQSGIEANR (180 aa)) forms a coiled coil. Disordered regions lie at residues 255 to 275 (TSTR…GFRN) and 424 to 476 (LEKQ…SRKN). Residues 278–490 (GAQPHYRLCL…KDMQTLQNSL (213 aa)) form a mediates interaction with microtubules region. Residues 388-491 (PSEELKDNLE…DMQTLQNSLQ (104 aa)) adopt a coiled-coil conformation. Basic and acidic residues predominate over residues 427 to 443 (QSTDKQKELKGNKKTLD). Positions 448-458 (SSSRSSVITRT) are enriched in low complexity. Positions 460–474 (SKKDFTKQRPGEKSR) are enriched in basic and acidic residues.

The protein belongs to the translokin family. In terms of assembly, homodimer and homooligomer. Interacts with FGF2 and RAP80. Does not interact with FGF1 or FGF2 isoform 24 kDa. Interacts with microtubules. In terms of tissue distribution, ubiquitous (at protein level).

It localises to the nucleus. The protein resides in the cytoplasm. Its subcellular location is the cytoskeleton. It is found in the microtubule organizing center. The protein localises to the centrosome. Centrosomal protein which may be required for microtubule attachment to centrosomes. May act by forming ring-like structures around microtubules. Mediates nuclear translocation and mitogenic activity of the internalized growth factor FGF2. This Rattus norvegicus (Rat) protein is Centrosomal protein of 57 kDa (Cep57).